Here is a 264-residue protein sequence, read N- to C-terminus: 3-methyl-2-oxobutanoate hydroxymethyltransferase (264 aa).

Positions 41 and 80 each coordinate Mg(2+). Residues 41–42, D80, and K109 contribute to the 3-methyl-2-oxobutanoate site; that span reads DS. E111 is a Mg(2+) binding site. The active-site Proton acceptor is the E178.

This sequence belongs to the PanB family. In terms of assembly, homodecamer; pentamer of dimers. Mg(2+) is required as a cofactor.

Its subcellular location is the cytoplasm. It carries out the reaction 3-methyl-2-oxobutanoate + (6R)-5,10-methylene-5,6,7,8-tetrahydrofolate + H2O = 2-dehydropantoate + (6S)-5,6,7,8-tetrahydrofolate. Its pathway is cofactor biosynthesis; (R)-pantothenate biosynthesis; (R)-pantoate from 3-methyl-2-oxobutanoate: step 1/2. Functionally, catalyzes the reversible reaction in which hydroxymethyl group from 5,10-methylenetetrahydrofolate is transferred onto alpha-ketoisovalerate to form ketopantoate. This is 3-methyl-2-oxobutanoate hydroxymethyltransferase from Thermosipho melanesiensis (strain DSM 12029 / CIP 104789 / BI429).